The primary structure comprises 427 residues: Probable G-protein coupled receptor 150 (427 aa).

The Extracellular segment spans residues 1–3; the sequence is MED. Residues 4 to 24 traverse the membrane as a helical segment; the sequence is PFSLAILNPASNLSVPTQPSW. Topologically, residues 25 to 50 are cytoplasmic; the sequence is SLNLTSEQGASVPGPHSPPRGPPSHR. The helical transmembrane segment at 51 to 71 threads the bilayer; it reads IHLVFLGIILVAAVAGNTTVL. Topologically, residues 72–89 are extracellular; it reads CRLCGGSSGPWPGPKRRK. Residues 90–110 traverse the membrane as a helical segment; that stretch reads MDFLLVQLAAADLYASGGTAL. The Cytoplasmic segment spans residues 111–170; that stretch reads SQLAWELLGDPRPALGDLACRLSHLLQASGRGASAHLVALIALERQLAVRIPQGPQLPAR. A helical transmembrane segment spans residues 171–191; it reads ALAALSWLLALLLALPPTFVV. At 192–230 the chain is on the extracellular side; the sequence is RWDAPPSSTANAWPGKHCCRGIFAPLPRWHLQVYALYEA. A helical membrane pass occupies residues 231 to 251; sequence IVGFAAPVALLGFSCGHLLCV. Residues 252-286 lie on the Cytoplasmic side of the membrane; that stretch reads WWQRGSQAPVARMPWSPSMARASLPSALPQAKVQS. Residues 287 to 307 traverse the membrane as a helical segment; sequence LKMSLALALLFVGCDLPYFAA. The Extracellular portion of the chain corresponds to 308–327; sequence RLAAAWSSKPAGDWERESLV. A helical membrane pass occupies residues 328-348; the sequence is AAMRVLEVANSAINPLIYLFF. Over 349–427 the chain is Cytoplasmic; sequence QAGDCRLWRR…PPPCSCESAF (79 aa). A disordered region spans residues 402 to 427; it reads EERNQGCLRPPPPRPRPPPCSCESAF. Residues 410 to 421 are compositionally biased toward pro residues; that stretch reads RPPPPRPRPPPC.

It belongs to the G-protein coupled receptor 1 family.

It is found in the cell membrane. Orphan receptor. This chain is Probable G-protein coupled receptor 150 (Gpr150), found in Mus musculus (Mouse).